A 283-amino-acid polypeptide reads, in one-letter code: Cyclin-C (283 aa).

The Cyclin N-terminal domain maps to 46–144; it reads NVIQALGEHL…ILECEFYLLE (99 aa). Residues 252–283 are disordered; it reads TILSKMPKPKPPPNSEGEQGPNGSQNSSYSQS. Residues 272-283 show a composition bias toward polar residues; that stretch reads PNGSQNSSYSQS. S275 carries the phosphoserine modification.

It belongs to the cyclin family. Cyclin C subfamily. As to quaternary structure, component of the Mediator complex, which is composed of MED1, MED4, MED6, MED7, MED8, MED9, MED10, MED11, MED12, MED13, MED13L, MED14, MED15, MED16, MED17, MED18, MED19, MED20, MED21, MED22, MED23, MED24, MED25, MED26, MED27, MED29, MED30, MED31, CCNC, CDK8 and CDC2L6/CDK11. The MED12, MED13, CCNC and CDK8 subunits form a distinct module termed the CDK8 module. Mediator containing the CDK8 module is less active than Mediator lacking this module in supporting transcriptional activation. Individual preparations of the Mediator complex lacking one or more distinct subunits have been variously termed ARC, CRSP, DRIP, PC2, SMCC and TRAP. The cylin/CDK pair formed by CCNC/CDK8 also associates with the large subunit of RNA polymerase II. As to expression, highest levels in pancreas. High levels in heart, liver, skeletal muscle and kidney. Low levels in brain.

The protein localises to the nucleus. Functionally, component of the Mediator complex, a coactivator involved in regulated gene transcription of nearly all RNA polymerase II-dependent genes. Mediator functions as a bridge to convey information from gene-specific regulatory proteins to the basal RNA polymerase II transcription machinery. Mediator is recruited to promoters by direct interactions with regulatory proteins and serves as a scaffold for the assembly of a functional preinitiation complex with RNA polymerase II and the general transcription factors. Binds to and activates cyclin-dependent kinase CDK8 that phosphorylates the CTD (C-terminal domain) of the large subunit of RNA polymerase II (RNAp II), which may inhibit the formation of a transcription initiation complex. This Homo sapiens (Human) protein is Cyclin-C (CCNC).